The primary structure comprises 386 residues: Succinate--CoA ligase [ADP-forming] subunit beta (386 aa).

In terms of domain architecture, ATP-grasp spans 9-244; that stretch reads KEILRNFGVP…LDEEDPAEVE (236 aa). ATP-binding positions include lysine 46, 53–55, glutamate 99, alanine 102, and glutamate 107; that span reads GRG. Residues asparagine 199 and aspartate 213 each contribute to the Mg(2+) site. Substrate is bound by residues asparagine 264 and 321-323; that span reads GIM.

Belongs to the succinate/malate CoA ligase beta subunit family. Heterotetramer of two alpha and two beta subunits. Requires Mg(2+) as cofactor.

It catalyses the reaction succinate + ATP + CoA = succinyl-CoA + ADP + phosphate. The catalysed reaction is GTP + succinate + CoA = succinyl-CoA + GDP + phosphate. The protein operates within carbohydrate metabolism; tricarboxylic acid cycle; succinate from succinyl-CoA (ligase route): step 1/1. Functionally, succinyl-CoA synthetase functions in the citric acid cycle (TCA), coupling the hydrolysis of succinyl-CoA to the synthesis of either ATP or GTP and thus represents the only step of substrate-level phosphorylation in the TCA. The beta subunit provides nucleotide specificity of the enzyme and binds the substrate succinate, while the binding sites for coenzyme A and phosphate are found in the alpha subunit. This Polaromonas sp. (strain JS666 / ATCC BAA-500) protein is Succinate--CoA ligase [ADP-forming] subunit beta.